Consider the following 365-residue polypeptide: GTPase Obg (365 aa).

An Obg domain is found at 1–159 (MKFIDEARIE…RMLKLELKVL (159 aa)). In terms of domain architecture, OBG-type G spans 160–334 (ADVGLLGMPN…LIYAIKDHLQ (175 aa)). GTP contacts are provided by residues 166–173 (GMPNAGKS), 191–195 (FTTLH), 213–216 (DIPG), 284–287 (NKLD), and 315–317 (SAL). The Mg(2+) site is built by Ser-173 and Thr-193.

This sequence belongs to the TRAFAC class OBG-HflX-like GTPase superfamily. OBG GTPase family. Monomer. Mg(2+) serves as cofactor.

It is found in the cytoplasm. In terms of biological role, an essential GTPase which binds GTP, GDP and possibly (p)ppGpp with moderate affinity, with high nucleotide exchange rates and a fairly low GTP hydrolysis rate. Plays a role in control of the cell cycle, stress response, ribosome biogenesis and in those bacteria that undergo differentiation, in morphogenesis control. In Cupriavidus necator (strain ATCC 17699 / DSM 428 / KCTC 22496 / NCIMB 10442 / H16 / Stanier 337) (Ralstonia eutropha), this protein is GTPase Obg.